Reading from the N-terminus, the 90-residue chain is MKTLLLTLVVVTIVCLDVGNSFSCYKTPDVKSEPCAPGENLCYTKTWCDRFCSIRGKVIELGCAATCPPAEPRKDITCCSTDNCNPHPAH.

The first 21 residues, 1 to 21 (MKTLLLTLVVVTIVCLDVGNS), serve as a signal peptide directing secretion. 5 disulfide bridges follow: C24–C42, C35–C63, C48–C52, C67–C78, and C79–C84.

This sequence belongs to the three-finger toxin family. Long-chain subfamily. Type II alpha-neurotoxin sub-subfamily. Expressed by the venom gland.

It localises to the secreted. Its function is as follows. Binds with high affinity to muscular (alpha-1/CHRNA1) and neuronal (alpha-7/CHRNA7) nicotinic acetylcholine receptor (nAChR) and inhibits acetylcholine from binding to the receptor, thereby impairing neuromuscular and neuronal transmission. The sequence is that of Long neurotoxin 1 from Austrelaps superbus (Lowland copperhead snake).